A 265-amino-acid polypeptide reads, in one-letter code: Glutamate racemase (265 aa).

Substrate contacts are provided by residues 9–10 (DS) and 41–42 (YS). Cysteine 73 acts as the Proton donor/acceptor in catalysis. Residue 74–75 (NT) participates in substrate binding. Cysteine 184 acts as the Proton donor/acceptor in catalysis. Residue 185–186 (TH) coordinates substrate.

The protein belongs to the aspartate/glutamate racemases family.

The enzyme catalyses L-glutamate = D-glutamate. It participates in cell wall biogenesis; peptidoglycan biosynthesis. In terms of biological role, provides the (R)-glutamate required for cell wall biosynthesis. This chain is Glutamate racemase, found in Haemophilus ducreyi (strain 35000HP / ATCC 700724).